Consider the following 314-residue polypeptide: Testisin (314 aa).

Positions 1–19 (MGARGALLLALLLARAGLR) are cleaved as a signal peptide. The propeptide occupies 20–41 (KPESQEAAPLSGPCGRRVITSR). Cystine bridges form between Cys-33–Cys-157 and Cys-67–Cys-83. One can recognise a Peptidase S1 domain in the interval 42–286 (IVGGEDAELG…HFEWIQKLMA (245 aa)). Active-site charge relay system residues include His-82 and Asp-137. 2 N-linked (GlcNAc...) asparagine glycosylation sites follow: Asn-167 and Asn-200. Cystine bridges form between Cys-171/Cys-244, Cys-204/Cys-223, and Cys-234/Cys-262. Ser-238 acts as the Charge relay system in catalysis. Asn-273 carries an N-linked (GlcNAc...) asparagine glycan. Residue Ser-288 is the site of GPI-anchor amidated serine attachment. A propeptide spans 289–314 (GMSQPDPSWPLLFFPLLWALPLLGPV) (removed in mature form).

It belongs to the peptidase S1 family. In terms of tissue distribution, expressed predominantly in premeiotic testicular germ cells, mostly late pachytene and diplotene spermatocytes.

It localises to the cell membrane. In terms of biological role, could regulate proteolytic events associated with testicular germ cell maturation. The sequence is that of Testisin (PRSS21) from Homo sapiens (Human).